Consider the following 285-residue polypeptide: ATP synthase gamma chain (285 aa).

Belongs to the ATPase gamma chain family. F-type ATPases have 2 components, CF(1) - the catalytic core - and CF(0) - the membrane proton channel. CF(1) has five subunits: alpha(3), beta(3), gamma(1), delta(1), epsilon(1). CF(0) has three main subunits: a, b and c.

The protein resides in the cell membrane. In terms of biological role, produces ATP from ADP in the presence of a proton gradient across the membrane. The gamma chain is believed to be important in regulating ATPase activity and the flow of protons through the CF(0) complex. This chain is ATP synthase gamma chain, found in Dehalococcoides mccartyi (strain ATCC BAA-2100 / JCM 16839 / KCTC 5957 / BAV1).